We begin with the raw amino-acid sequence, 366 residues long: NADH-quinone oxidoreductase subunit D (366 aa).

The protein belongs to the complex I 49 kDa subunit family. In terms of assembly, NDH-1 is composed of 14 different subunits. Subunits NuoB, C, D, E, F, and G constitute the peripheral sector of the complex.

It is found in the cell membrane. It carries out the reaction a quinone + NADH + 5 H(+)(in) = a quinol + NAD(+) + 4 H(+)(out). Functionally, NDH-1 shuttles electrons from NADH, via FMN and iron-sulfur (Fe-S) centers, to quinones in the respiratory chain. The immediate electron acceptor for the enzyme in this species is believed to be a menaquinone. Couples the redox reaction to proton translocation (for every two electrons transferred, four hydrogen ions are translocated across the cytoplasmic membrane), and thus conserves the redox energy in a proton gradient. The sequence is that of NADH-quinone oxidoreductase subunit D from Geobacillus thermodenitrificans (strain NG80-2).